The primary structure comprises 501 residues: Phenylalanine--tRNA ligase alpha subunit (501 aa).

L-phenylalanine-binding residues include T340 and F423. Position 425 (E425) interacts with Mg(2+). F448 serves as a coordination point for L-phenylalanine.

Belongs to the class-II aminoacyl-tRNA synthetase family. Phe-tRNA synthetase alpha subunit type 2 subfamily. In terms of assembly, tetramer of two alpha and two beta subunits. Requires Mg(2+) as cofactor.

The protein resides in the cytoplasm. It catalyses the reaction tRNA(Phe) + L-phenylalanine + ATP = L-phenylalanyl-tRNA(Phe) + AMP + diphosphate + H(+). The sequence is that of Phenylalanine--tRNA ligase alpha subunit from Methanococcus vannielii (strain ATCC 35089 / DSM 1224 / JCM 13029 / OCM 148 / SB).